A 359-amino-acid chain; its full sequence is MNGKPAFDKPKVELHVHLDGAIRLKTVLDVAKRRGISLPVSMEEELKELCTVNEPATLTEFLGKFSHFMHVIAGDREAIKRIAYEFVETKAKEGVIYVEARYSPHFLANKGVEPLPWDQKPGDITPDDVVDLVNQGFKEGEQAFKTKARSILCCMRHMPNWSMEVVELCKKFHKDGVVAIDLAGDESMNCESYPGHKKAFEEAVRSNVHRTVHAGEVGPASVVREAVEVLKAERIGHGYHTLEDQNLYKQLLHQNMHFEMCPVSSRLTGACEPDFTKHPLITFKKDKANYSLNTDDPTIFNSTLNSDYEVVQKYMDFTEEEFKRLNINAAKSCFLPEKEKEKLLNQLYEAYGMRKSTSF.

Zn(2+)-binding residues include His15 and His17. Substrate contacts are provided by His17, Asp19, and Gly184. Residue His213 participates in Zn(2+) binding. Residue Glu216 is the Proton donor of the active site. Zn(2+) is bound at residue Asp295. Residue Asp296 coordinates substrate.

The protein belongs to the metallo-dependent hydrolases superfamily. Adenosine and AMP deaminases family. Zn(2+) is required as a cofactor.

The protein localises to the cell membrane. The protein resides in the cell junction. It is found in the cytoplasmic vesicle lumen. It localises to the cytoplasm. Its subcellular location is the lysosome. The catalysed reaction is adenosine + H2O + H(+) = inosine + NH4(+). The enzyme catalyses 2'-deoxyadenosine + H2O + H(+) = 2'-deoxyinosine + NH4(+). In terms of biological role, catalyzes the hydrolytic deamination of adenosine and 2-deoxyadenosine. Plays an important role in purine metabolism and in adenosine homeostasis. Modulates signaling by extracellular adenosine, and so contributes indirectly to cellular signaling events. May act as a positive regulator of T-cell coactivation. In Danio rerio (Zebrafish), this protein is Adenosine deaminase (ada).